Reading from the N-terminus, the 365-residue chain is tRNA/tmRNA (uracil-C(5))-methyltransferase (365 aa).

The S-adenosyl-L-methionine site is built by Gln-189, Tyr-217, Asn-222, Glu-238, and Asp-298. The active-site Nucleophile is Cys-323. The active-site Proton acceptor is the Glu-357.

This sequence belongs to the class I-like SAM-binding methyltransferase superfamily. RNA M5U methyltransferase family. TrmA subfamily.

The catalysed reaction is uridine(54) in tRNA + S-adenosyl-L-methionine = 5-methyluridine(54) in tRNA + S-adenosyl-L-homocysteine + H(+). The enzyme catalyses uridine(341) in tmRNA + S-adenosyl-L-methionine = 5-methyluridine(341) in tmRNA + S-adenosyl-L-homocysteine + H(+). Functionally, dual-specificity methyltransferase that catalyzes the formation of 5-methyluridine at position 54 (m5U54) in all tRNAs, and that of position 341 (m5U341) in tmRNA (transfer-mRNA). In Shewanella loihica (strain ATCC BAA-1088 / PV-4), this protein is tRNA/tmRNA (uracil-C(5))-methyltransferase.